A 349-amino-acid chain; its full sequence is UDP-N-acetylenolpyruvoylglucosamine reductase (349 aa).

Residues 24–197 (FGIDATARFA…VAVTFRLPKR (174 aa)) form the FAD-binding PCMH-type domain. R173 is a catalytic residue. S249 acts as the Proton donor in catalysis. E345 is a catalytic residue.

The protein belongs to the MurB family. FAD is required as a cofactor.

The protein resides in the cytoplasm. The enzyme catalyses UDP-N-acetyl-alpha-D-muramate + NADP(+) = UDP-N-acetyl-3-O-(1-carboxyvinyl)-alpha-D-glucosamine + NADPH + H(+). It functions in the pathway cell wall biogenesis; peptidoglycan biosynthesis. Cell wall formation. This Burkholderia ambifaria (strain MC40-6) protein is UDP-N-acetylenolpyruvoylglucosamine reductase.